Consider the following 368-residue polypeptide: 3-isopropylmalate dehydrogenase (368 aa).

Residue 79-92 (GPRYEGLPWDLRPE) participates in NAD(+) binding. Substrate contacts are provided by arginine 99, arginine 109, arginine 138, and aspartate 228. Positions 228, 252, and 256 each coordinate Mg(2+). Residue 292–304 (GSAPDIAGQDRAN) coordinates NAD(+).

This sequence belongs to the isocitrate and isopropylmalate dehydrogenases family. LeuB type 1 subfamily. As to quaternary structure, homodimer. Mg(2+) serves as cofactor. Requires Mn(2+) as cofactor.

It localises to the cytoplasm. It catalyses the reaction (2R,3S)-3-isopropylmalate + NAD(+) = 4-methyl-2-oxopentanoate + CO2 + NADH. The protein operates within amino-acid biosynthesis; L-leucine biosynthesis; L-leucine from 3-methyl-2-oxobutanoate: step 3/4. Catalyzes the oxidation of 3-carboxy-2-hydroxy-4-methylpentanoate (3-isopropylmalate) to 3-carboxy-4-methyl-2-oxopentanoate. The product decarboxylates to 4-methyl-2 oxopentanoate. This is 3-isopropylmalate dehydrogenase from Symbiobacterium thermophilum (strain DSM 24528 / JCM 14929 / IAM 14863 / T).